Here is a 102-residue protein sequence, read N- to C-terminus: MAKEKIRIRLKAYDHRILDQSADKIVETAKRSGATVSGPIPLPTEKTVYTILRAVHKYKDSREQFEMRTHKRLIDIVSPTPQTVDSLMRLDLPSGVDIEIKL.

Belongs to the universal ribosomal protein uS10 family. Part of the 30S ribosomal subunit.

In terms of biological role, involved in the binding of tRNA to the ribosomes. The protein is Small ribosomal subunit protein uS10 of Bacillus anthracis (strain A0248).